The primary structure comprises 216 residues: Pyridoxine/pyridoxamine 5'-phosphate oxidase (216 aa).

Substrate is bound by residues 9-12 (RLSY) and arginine 67. Residues 62-67 (RIVLLR), 77-78 (YT), lysine 84, and glutamine 106 each bind FMN. Tyrosine 124, arginine 128, and serine 132 together coordinate substrate. FMN is bound by residues 142 to 143 (QS) and tryptophan 188. 194 to 196 (RMH) contributes to the substrate binding site. Arginine 198 contacts FMN.

Belongs to the pyridoxamine 5'-phosphate oxidase family. In terms of assembly, homodimer. Requires FMN as cofactor.

It catalyses the reaction pyridoxamine 5'-phosphate + O2 + H2O = pyridoxal 5'-phosphate + H2O2 + NH4(+). It carries out the reaction pyridoxine 5'-phosphate + O2 = pyridoxal 5'-phosphate + H2O2. The protein operates within cofactor metabolism; pyridoxal 5'-phosphate salvage; pyridoxal 5'-phosphate from pyridoxamine 5'-phosphate: step 1/1. It functions in the pathway cofactor metabolism; pyridoxal 5'-phosphate salvage; pyridoxal 5'-phosphate from pyridoxine 5'-phosphate: step 1/1. Its function is as follows. Catalyzes the oxidation of either pyridoxine 5'-phosphate (PNP) or pyridoxamine 5'-phosphate (PMP) into pyridoxal 5'-phosphate (PLP). The protein is Pyridoxine/pyridoxamine 5'-phosphate oxidase of Psychrobacter arcticus (strain DSM 17307 / VKM B-2377 / 273-4).